A 309-amino-acid chain; its full sequence is 4-hydroxy-3-methylbut-2-enyl diphosphate reductase (309 aa).

Position 13 (Cys-13) interacts with [4Fe-4S] cluster. Residues His-42 and His-75 each coordinate (2E)-4-hydroxy-3-methylbut-2-enyl diphosphate. 2 residues coordinate dimethylallyl diphosphate: His-42 and His-75. Residues His-42 and His-75 each coordinate isopentenyl diphosphate. Cys-97 contacts [4Fe-4S] cluster. His-125 contributes to the (2E)-4-hydroxy-3-methylbut-2-enyl diphosphate binding site. Position 125 (His-125) interacts with dimethylallyl diphosphate. His-125 contacts isopentenyl diphosphate. The Proton donor role is filled by Glu-127. Position 165 (Thr-165) interacts with (2E)-4-hydroxy-3-methylbut-2-enyl diphosphate. Cys-195 lines the [4Fe-4S] cluster pocket. The (2E)-4-hydroxy-3-methylbut-2-enyl diphosphate site is built by Ser-223, Ser-224, Asn-225, and Ser-267. Positions 223, 224, 225, and 267 each coordinate dimethylallyl diphosphate. Isopentenyl diphosphate is bound by residues Ser-223, Ser-224, Asn-225, and Ser-267.

This sequence belongs to the IspH family. [4Fe-4S] cluster is required as a cofactor.

The enzyme catalyses isopentenyl diphosphate + 2 oxidized [2Fe-2S]-[ferredoxin] + H2O = (2E)-4-hydroxy-3-methylbut-2-enyl diphosphate + 2 reduced [2Fe-2S]-[ferredoxin] + 2 H(+). It carries out the reaction dimethylallyl diphosphate + 2 oxidized [2Fe-2S]-[ferredoxin] + H2O = (2E)-4-hydroxy-3-methylbut-2-enyl diphosphate + 2 reduced [2Fe-2S]-[ferredoxin] + 2 H(+). It functions in the pathway isoprenoid biosynthesis; dimethylallyl diphosphate biosynthesis; dimethylallyl diphosphate from (2E)-4-hydroxy-3-methylbutenyl diphosphate: step 1/1. It participates in isoprenoid biosynthesis; isopentenyl diphosphate biosynthesis via DXP pathway; isopentenyl diphosphate from 1-deoxy-D-xylulose 5-phosphate: step 6/6. Catalyzes the conversion of 1-hydroxy-2-methyl-2-(E)-butenyl 4-diphosphate (HMBPP) into a mixture of isopentenyl diphosphate (IPP) and dimethylallyl diphosphate (DMAPP). Acts in the terminal step of the DOXP/MEP pathway for isoprenoid precursor biosynthesis. The sequence is that of 4-hydroxy-3-methylbut-2-enyl diphosphate reductase from Chlamydia caviae (strain ATCC VR-813 / DSM 19441 / 03DC25 / GPIC) (Chlamydophila caviae).